Reading from the N-terminus, the 173-residue chain is Crossover junction endodeoxyribonuclease RuvC (173 aa).

Active-site residues include aspartate 8, glutamate 69, and aspartate 141. Mg(2+)-binding residues include aspartate 8, glutamate 69, and aspartate 141.

It belongs to the RuvC family. Homodimer which binds Holliday junction (HJ) DNA. The HJ becomes 2-fold symmetrical on binding to RuvC with unstacked arms; it has a different conformation from HJ DNA in complex with RuvA. In the full resolvosome a probable DNA-RuvA(4)-RuvB(12)-RuvC(2) complex forms which resolves the HJ. Mg(2+) is required as a cofactor.

It is found in the cytoplasm. It carries out the reaction Endonucleolytic cleavage at a junction such as a reciprocal single-stranded crossover between two homologous DNA duplexes (Holliday junction).. The RuvA-RuvB-RuvC complex processes Holliday junction (HJ) DNA during genetic recombination and DNA repair. Endonuclease that resolves HJ intermediates. Cleaves cruciform DNA by making single-stranded nicks across the HJ at symmetrical positions within the homologous arms, yielding a 5'-phosphate and a 3'-hydroxyl group; requires a central core of homology in the junction. The consensus cleavage sequence is 5'-(A/T)TT(C/G)-3'. Cleavage occurs on the 3'-side of the TT dinucleotide at the point of strand exchange. HJ branch migration catalyzed by RuvA-RuvB allows RuvC to scan DNA until it finds its consensus sequence, where it cleaves and resolves the cruciform DNA. The sequence is that of Crossover junction endodeoxyribonuclease RuvC from Xylella fastidiosa (strain Temecula1 / ATCC 700964).